Reading from the N-terminus, the 228-residue chain is UPF0758 protein CLD_1541 (228 aa).

In terms of domain architecture, MPN spans 106 to 228; the sequence is KINTPLDVSN…YVSMKEKGTI (123 aa). Residues His177, His179, and Asp190 each coordinate Zn(2+). A JAMM motif motif is present at residues 177–190; it reads HNHPSGDPTPSKED.

This sequence belongs to the UPF0758 family.

This Clostridium botulinum (strain Okra / Type B1) protein is UPF0758 protein CLD_1541.